Here is a 183-residue protein sequence, read N- to C-terminus: UPF0398 protein PEPE_0933 (183 aa).

Belongs to the UPF0398 family.

The chain is UPF0398 protein PEPE_0933 from Pediococcus pentosaceus (strain ATCC 25745 / CCUG 21536 / LMG 10740 / 183-1w).